Here is a 256-residue protein sequence, read N- to C-terminus: Gramicidin S biosynthesis protein GrsT (256 aa).

The active site involves Ser-95.

This sequence belongs to the thioesterase family.

It participates in antibiotic biosynthesis; gramicidin S biosynthesis. Probable thioesterase involved in the biosynthesis of gramicidin S. The chain is Gramicidin S biosynthesis protein GrsT (grsT) from Aneurinibacillus migulanus (Bacillus migulanus).